The primary structure comprises 460 residues: Elongation factor 1-alpha (460 aa).

Gly-2 is modified (n,N,N-trimethylglycine). The residue at position 3 (Lys-3) is an N6,N6-dimethyllysine; alternate. An N6-methyllysine; alternate modification is found at Lys-3. Positions 6–241 (KTHINVVVIG…DAIEPPKRPT (236 aa)) constitute a tr-type G domain. The interval 15–22 (GHVDSGKS) is G1. 15–22 (GHVDSGKS) provides a ligand contact to GTP. N6-methyllysine is present on Lys-31. Residues 71 to 75 (GITID) form a G2 region. Lys-80 carries the post-translational modification N6,N6,N6-trimethyllysine. The segment at 92 to 95 (DAPG) is G3. GTP is bound by residues 92 to 96 (DAPGH) and 154 to 157 (NKMD). Residues 154–157 (NKMD) are G4. Residues 193 to 195 (SGF) form a G5 region. Lys-317 bears the N6,N6-dimethyllysine; alternate mark. Lys-317 carries the post-translational modification N6-methyllysine; alternate. The residue at position 391 (Lys-391) is an N6-methyllysine.

It belongs to the TRAFAC class translation factor GTPase superfamily. Classic translation factor GTPase family. EF-Tu/EF-1A subfamily.

It localises to the cytoplasm. Its function is as follows. This protein promotes the GTP-dependent binding of aminoacyl-tRNA to the A-site of ribosomes during protein biosynthesis. The polypeptide is Elongation factor 1-alpha (tef-1) (Neurospora crassa (strain ATCC 24698 / 74-OR23-1A / CBS 708.71 / DSM 1257 / FGSC 987)).